The sequence spans 236 residues: Ubiquinone biosynthesis O-methyltransferase (236 aa).

Arg39, Gly59, Asp80, and Met124 together coordinate S-adenosyl-L-methionine.

This sequence belongs to the methyltransferase superfamily. UbiG/COQ3 family.

It catalyses the reaction a 3-demethylubiquinol + S-adenosyl-L-methionine = a ubiquinol + S-adenosyl-L-homocysteine + H(+). The catalysed reaction is a 3-(all-trans-polyprenyl)benzene-1,2-diol + S-adenosyl-L-methionine = a 2-methoxy-6-(all-trans-polyprenyl)phenol + S-adenosyl-L-homocysteine + H(+). The protein operates within cofactor biosynthesis; ubiquinone biosynthesis. Its function is as follows. O-methyltransferase that catalyzes the 2 O-methylation steps in the ubiquinone biosynthetic pathway. The protein is Ubiquinone biosynthesis O-methyltransferase of Shewanella putrefaciens (strain CN-32 / ATCC BAA-453).